Reading from the N-terminus, the 497-residue chain is Arginine/ornithine antiporter ArcD2 (497 aa).

13 helical membrane passes run 8–28 (GISLFALLAIIISGAIGGGVF), 41–61 (GGVVISWLFIGFGILMLVLSF), 88–108 (FLSGWGYWISAWTGTIGFAVL), 127–147 (SLTILSVIIVSIISWILMLLV), 160–180 (IVMIAKLIPLVVFSITGIILF), 220–240 (IKGSLMVMVWVFVGIEGATMM), 255–275 (VIGLAVLLVIYVLLSLLPYGY), 297–317 (VGGWGGSLMAVGLMISLLGAW), 354–374 (LLITQLMIQIFIIITYFVANA), 378–398 (FIYMATAVIMICYALVGAYLF), 406–426 (SVKNILIGFFTFAFQALALYL), 429–449 (WQYVWLAMILYTIGFLLFIGA), and 462–482 (WLGMLVVTVLGVLAIVVLICG).

This sequence belongs to the amino acid-polyamine-organocation (APC) superfamily. Basic amino acid/polyamine antiporter (APA) (TC 2.A.3.2) family.

It localises to the cell membrane. The catalysed reaction is L-ornithine(in) + L-arginine(out) = L-ornithine(out) + L-arginine(in). Its function is as follows. Catalyzes electroneutral exchange between L-arginine and L-ornithine. Can also efficiently translocate L-alanine. May function in vivo as a L-arginine/L-alanine exchanger in a pathway together with the arcT gene, which is found adjacent to the arcD2 gene in the ADI gene cluster. The sequence is that of Arginine/ornithine antiporter ArcD2 from Lactococcus lactis subsp. cremoris (strain MG1363).